Consider the following 429-residue polypeptide: Dihydroorotase (429 aa).

His-62 and His-64 together coordinate Zn(2+). Substrate-binding positions include 64-66 (HFR) and Asn-96. Residues Asp-154, His-181, and His-234 each coordinate Zn(2+). Asn-280 contributes to the substrate binding site. Zn(2+) is bound at residue Asp-307. Asp-307 is a catalytic residue. Residues His-311 and 325-326 (FG) contribute to the substrate site.

Belongs to the metallo-dependent hydrolases superfamily. DHOase family. Class I DHOase subfamily. It depends on Zn(2+) as a cofactor.

The catalysed reaction is (S)-dihydroorotate + H2O = N-carbamoyl-L-aspartate + H(+). It participates in pyrimidine metabolism; UMP biosynthesis via de novo pathway; (S)-dihydroorotate from bicarbonate: step 3/3. Functionally, catalyzes the reversible cyclization of carbamoyl aspartate to dihydroorotate. The chain is Dihydroorotase from Latilactobacillus sakei subsp. sakei (strain 23K) (Lactobacillus sakei subsp. sakei).